The chain runs to 316 residues: Calumenin-B (316 aa).

The signal sequence occupies residues 1-19 (MELRPLVMCFALCVVYASS). 6 consecutive EF-hand domains span residues 69–104 (ESKERLGMLVERIDEDKDGYVSVEEMKKWIKHSQKR), 105–140 (WIYDDVDRQWKGHDHNGDGLVSWEEYKNATYGYILD), 152–187 (QMISRDERRFKMSDLDADLKANKEEFTAFLHPEEYD), 189–224 (MKDIVVLETMEDIDKNGDGFIDLEEYIGDMYNQEGD), 230–265 (WVRTEREQFTEFRDTNKDGRMDKEETKDWILPSDYD), and 266–301 (HAEAEAKHLVYESDNDKDGKLTKAEIVEKYDLFVGS). 9 residues coordinate Ca(2+): aspartate 82, aspartate 84, aspartate 86, tyrosine 88, glutamate 93, aspartate 118, asparagine 120, aspartate 122, and glutamate 129. N-linked (GlcNAc...) asparagine glycosylation is present at asparagine 132. The Ca(2+) site is built by aspartate 165, aspartate 167, aspartate 169, lysine 171, glutamate 176, aspartate 202, asparagine 204, aspartate 206, glutamate 213, aspartate 243, asparagine 245, aspartate 247, arginine 249, glutamate 254, aspartate 279, aspartate 281, aspartate 283, lysine 285, and glutamate 290. Residues 313-316 (HDEF) carry the Prevents secretion from ER motif.

It belongs to the CREC family. Interacts with ggcx.

The protein resides in the endoplasmic reticulum membrane. The protein localises to the golgi apparatus. It localises to the secreted. Its subcellular location is the melanosome. It is found in the sarcoplasmic reticulum lumen. Involved in regulation of vitamin K-dependent carboxylation of multiple N-terminal glutamate residues. Seems to inhibit gamma-carboxylase ggcx. Binds 7 calcium ions with a low affinity. The chain is Calumenin-B (calub) from Salmo salar (Atlantic salmon).